Reading from the N-terminus, the 114-residue chain is uncharacterized protein (114 aa).

An N-terminal signal peptide occupies residues Met1 to Ala19. Ser41 carries the phosphoserine modification.

This sequence belongs to the protease inhibitor I9 family.

This is an uncharacterized protein from Saccharomyces cerevisiae (strain ATCC 204508 / S288c) (Baker's yeast).